The following is a 272-amino-acid chain: Merozoite surface protein 2 (272 aa).

A signal peptide spans 1-20; it reads MKVIKTLSIINFFIFVTFNI. N-linked (GlcNAc...) asparagine glycans are attached at residues N22 and N36. The segment at 44-198 is polymorphic region; that stretch reads AESKPSTGAG…EQTESPELQS (155 aa). The disordered stretch occupies residues 45-233; it reads ESKPSTGAGG…DSQKECTDGN (189 aa). The span at 51–82 shows a compositional bias: gly residues; sequence GAGGSAGGSAGGSAGGSAGGSAGGSAGSGDGN. Repeat copies occupy residues 53–56, 57–60, 61–64, 65–68, 69–72, and 73–76. The interval 53-76 is 6 X 4 AA tandem repeats of G-G-S-A; it reads GGSAGGSAGGSAGGSAGGSAGGSA. A compositionally biased stretch (low complexity) spans 83–119; that stretch reads GADAEGSSSTPATTTTTKTTTTTTTTNDAEASTSTSS. Residues 122-137 show a composition bias toward basic and acidic residues; sequence PNHKNAETNPKGKGEV. Polar residues-rich tracts occupy residues 139 to 165 and 172 to 200; these read EPNQANKETQNNSNVQQDSQTKSNVPP and KSPTAQPEQAENSAPTAEQTESPELQSAP. The N-linked (GlcNAc...) asparagine glycan is linked to N149. N-linked (GlcNAc...) asparagine glycosylation is present at N221. A disulfide bond links C229 and C237. 2 N-linked (GlcNAc...) asparagine glycosylation sites follow: N245 and N246. N246 carries the GPI-anchor amidated asparagine lipid modification. Residues 247 to 272 constitute a propeptide, removed in mature form; it reads SSNIASINKFVVLISATLVLSFAIFI.

Its subcellular location is the cell membrane. Functionally, may play a role in the merozoite attachment to the erythrocyte. The protein is Merozoite surface protein 2 of Plasmodium falciparum (isolate 3D7).